Consider the following 350-residue polypeptide: 2-oxoglutarate-dependent ethylene/succinate-forming enzyme (350 aa).

One can recognise a Fe2OG dioxygenase domain in the interval 166–286 (GWHHMRVLRF…RFACAYFHEP (121 aa)). Residues His189 and His268 each coordinate Fe cation.

Belongs to the iron/ascorbate-dependent oxidoreductase family. Monomer. The cofactor is Fe(2+).

The enzyme catalyses 2-oxoglutarate + O2 + 2 H(+) = ethene + 3 CO2 + H2O. The catalysed reaction is L-arginine + 2-oxoglutarate + O2 = guanidine + L-glutamate 5-semialdehyde + succinate + CO2. It functions in the pathway alkene biosynthesis; ethylene biosynthesis via 2-oxoglutarate. In terms of biological role, simultaneously catalyzes two reactions, namely formation of ethylene and of succinate from 2-oxoglutarate. The protein is 2-oxoglutarate-dependent ethylene/succinate-forming enzyme (efe) of Pseudomonas amygdali pv. sesami (Pseudomonas syringae pv. sesami).